The primary structure comprises 535 residues: Phosphoenolpyruvate carboxykinase (ATP) 1 (535 aa).

Residues Arg58, Tyr193, and Lys199 each contribute to the substrate site. ATP is bound by residues Lys199, His218, and 234-242 (GLSGTGKTT). Mn(2+)-binding residues include Lys199 and His218. Mn(2+) is bound at residue Asp255. Residues Glu283, Arg321, 440–441 (RI), and Thr446 each bind ATP. A substrate-binding site is contributed by Arg321.

The protein belongs to the phosphoenolpyruvate carboxykinase (ATP) family. The cofactor is Mn(2+).

It is found in the cytoplasm. The enzyme catalyses oxaloacetate + ATP = phosphoenolpyruvate + ADP + CO2. The protein operates within carbohydrate biosynthesis; gluconeogenesis. In terms of biological role, involved in the gluconeogenesis. Catalyzes the conversion of oxaloacetate (OAA) to phosphoenolpyruvate (PEP) through direct phosphoryl transfer between the nucleoside triphosphate and OAA. In Salinibacter ruber (strain DSM 13855 / M31), this protein is Phosphoenolpyruvate carboxykinase (ATP) 1.